Here is a 272-residue protein sequence, read N- to C-terminus: HMP-PP phosphatase (272 aa).

Residue aspartate 8 is the Nucleophile of the active site. Mg(2+)-binding residues include aspartate 8, aspartate 10, and aspartate 212.

It belongs to the HAD-like hydrolase superfamily. Cof family. It depends on Mg(2+) as a cofactor.

It carries out the reaction 4-amino-2-methyl-5-(diphosphooxymethyl)pyrimidine + H2O = 4-amino-2-methyl-5-(phosphooxymethyl)pyrimidine + phosphate + H(+). Its function is as follows. Catalyzes the hydrolysis of 4-amino-2-methyl-5-hydroxymethylpyrimidine pyrophosphate (HMP-PP) to 4-amino-2-methyl-5-hydroxymethylpyrimidine phosphate (HMP-P). The protein is HMP-PP phosphatase of Salmonella choleraesuis (strain SC-B67).